The chain runs to 158 residues: SsrA-binding protein (158 aa).

Belongs to the SmpB family.

It localises to the cytoplasm. Required for rescue of stalled ribosomes mediated by trans-translation. Binds to transfer-messenger RNA (tmRNA), required for stable association of tmRNA with ribosomes. tmRNA and SmpB together mimic tRNA shape, replacing the anticodon stem-loop with SmpB. tmRNA is encoded by the ssrA gene; the 2 termini fold to resemble tRNA(Ala) and it encodes a 'tag peptide', a short internal open reading frame. During trans-translation Ala-aminoacylated tmRNA acts like a tRNA, entering the A-site of stalled ribosomes, displacing the stalled mRNA. The ribosome then switches to translate the ORF on the tmRNA; the nascent peptide is terminated with the 'tag peptide' encoded by the tmRNA and targeted for degradation. The ribosome is freed to recommence translation, which seems to be the essential function of trans-translation. The sequence is that of SsrA-binding protein from Caldicellulosiruptor saccharolyticus (strain ATCC 43494 / DSM 8903 / Tp8T 6331).